Here is a 265-residue protein sequence, read N- to C-terminus: Hydroxyethylthiazole kinase (265 aa).

Met-50 serves as a coordination point for substrate. ATP is bound by residues Arg-125 and Thr-171. Gly-198 contacts substrate.

It belongs to the Thz kinase family. Mg(2+) is required as a cofactor.

It carries out the reaction 5-(2-hydroxyethyl)-4-methylthiazole + ATP = 4-methyl-5-(2-phosphooxyethyl)-thiazole + ADP + H(+). The protein operates within cofactor biosynthesis; thiamine diphosphate biosynthesis; 4-methyl-5-(2-phosphoethyl)-thiazole from 5-(2-hydroxyethyl)-4-methylthiazole: step 1/1. Functionally, catalyzes the phosphorylation of the hydroxyl group of 4-methyl-5-beta-hydroxyethylthiazole (THZ). This is Hydroxyethylthiazole kinase from Salmonella choleraesuis (strain SC-B67).